A 327-amino-acid polypeptide reads, in one-letter code: L-lactate dehydrogenase (327 aa).

Residues valine 18, aspartate 39, lysine 44, tyrosine 69, and 83–84 (GA) contribute to the NAD(+) site. Substrate-binding positions include glutamine 86, arginine 92, and 124-127 (NPVD). NAD(+)-binding positions include 122 to 124 (AAN) and serine 147. Position 152–155 (152–155 (DSAR)) interacts with substrate. Residues arginine 157 and histidine 172 each coordinate beta-D-fructose 1,6-bisphosphate. Catalysis depends on histidine 179, which acts as the Proton acceptor. Tyrosine 224 bears the Phosphotyrosine mark. Threonine 233 is a substrate binding site.

This sequence belongs to the LDH/MDH superfamily. LDH family. As to quaternary structure, homotetramer.

Its subcellular location is the cytoplasm. The enzyme catalyses (S)-lactate + NAD(+) = pyruvate + NADH + H(+). It functions in the pathway fermentation; pyruvate fermentation to lactate; (S)-lactate from pyruvate: step 1/1. Allosterically activated by fructose 1,6-bisphosphate (FBP). Its function is as follows. Catalyzes the conversion of lactate to pyruvate. This chain is L-lactate dehydrogenase, found in Streptococcus uberis (strain ATCC BAA-854 / 0140J).